A 336-amino-acid polypeptide reads, in one-letter code: Atypical chemokine receptor 1 (336 aa).

The Extracellular portion of the chain corresponds to 1–63 (MGNCLHQAEL…CNLLDDSSLP (63 aa)). N-linked (GlcNAc...) asparagine glycans are attached at residues Asn16 and Asn33. Intrachain disulfides connect Cys51–Cys276 and Cys129–Cys195. The chain crosses the membrane as a helical span at residues 64-84 (FFILASVLGILASSTVLFMLF). The Cytoplasmic segment spans residues 85-95 (RPLFRWQLCPG). The helical transmembrane segment at 96–116 (WPVLAQLAVGSALFSIVVPIL) threads the bilayer. Over 117-129 (APGLGNTRSSALC) the chain is Extracellular. The chain crosses the membrane as a helical span at residues 130–153 (SLGYCVWYGSAFAQALLLGCHASL). The Cytoplasmic segment spans residues 154-166 (GPKLGAGQVPGLT). A helical transmembrane segment spans residues 167 to 187 (LGLTVGLWGAAALLTVPITLA). The Extracellular portion of the chain corresponds to 188-207 (SGASDGLCTPIYSTELKALQ). The helical transmembrane segment at 208 to 228 (ATHTVACFAIFVLLPLGLFGA) threads the bilayer. The Cytoplasmic portion of the chain corresponds to 229–244 (KGVKKALGMGPGPWMT). Residues 245–265 (ILWIWFIFWWPHGVVLGLDFL) traverse the membrane as a helical segment. The Extracellular portion of the chain corresponds to 266–287 (VRSKLLLLPTCLAQQVLDLLLN). The helical transmembrane segment at 288–308 (LAEALTIVHCVATPLLLALFC) threads the bilayer. The Cytoplasmic segment spans residues 309-336 (HQATRTLLPSLPLPERWSSPVDTLGSKS).

It belongs to the G-protein coupled receptor 1 family. Atypical chemokine receptor subfamily.

It is found in the early endosome. Its subcellular location is the recycling endosome. The protein localises to the membrane. Its function is as follows. Atypical chemokine receptor that controls chemokine levels and localization via high-affinity chemokine binding that is uncoupled from classic ligand-driven signal transduction cascades, resulting instead in chemokine sequestration, degradation, or transcytosis. Also known as interceptor (internalizing receptor) or chemokine-scavenging receptor or chemokine decoy receptor. Has a promiscuous chemokine-binding profile, interacting with inflammatory chemokines of both the CXC and the CC subfamilies but not with homeostatic chemokines. Acts as a receptor for chemokines including CCL2, CCL5, CCL7, CCL11, CCL13, CCL14, CCL17, CXCL5, CXCL6, IL8/CXCL8, CXCL11, GRO, RANTES, MCP-1 and TARC. May regulate chemokine bioavailability and, consequently, leukocyte recruitment through two distinct mechanisms: when expressed in endothelial cells, it sustains the abluminal to luminal transcytosis of tissue-derived chemokines and their subsequent presentation to circulating leukocytes; when expressed in erythrocytes, serves as blood reservoir of cognate chemokines but also as a chemokine sink, buffering potential surges in plasma chemokine levels. The protein is Atypical chemokine receptor 1 (ACKR1) of Sapajus apella (Brown-capped capuchin).